We begin with the raw amino-acid sequence, 134 residues long: Profilin-2 (134 aa).

Cys13 and Cys118 are oxidised to a cystine. The Involved in PIP2 interaction signature appears at 84 to 100; the sequence is AVIRGKKGSGGITIKKT. Thr114 carries the post-translational modification Phosphothreonine.

Belongs to the profilin family. Occurs in many kinds of cells as a complex with monomeric actin in a 1:1 ratio. In terms of processing, phosphorylated by MAP kinases.

The protein resides in the cytoplasm. Its subcellular location is the cytoskeleton. Functionally, binds to actin and affects the structure of the cytoskeleton. At high concentrations, profilin prevents the polymerization of actin, whereas it enhances it at low concentrations. The chain is Profilin-2 from Olea europaea (Common olive).